The primary structure comprises 729 residues: Fatty acid oxidation complex subunit alpha (729 aa).

The tract at residues 1 to 189 (MLYKGDTLYL…KIGLVDGVVK (189 aa)) is enoyl-CoA hydratase/isomerase. Substrate is bound at residue D296. The tract at residues 311-729 (ETPKQAAVLG…ARPVGDLKTA (419 aa)) is 3-hydroxyacyl-CoA dehydrogenase. Residues M324, D343, 400-402 (VVE), K407, and S429 each bind NAD(+). H450 (for 3-hydroxyacyl-CoA dehydrogenase activity) is an active-site residue. N453 lines the NAD(+) pocket. 2 residues coordinate substrate: N500 and Y660. The tract at residues 708 to 729 (RHNEPYYPPVEPARPVGDLKTA) is disordered.

The protein in the N-terminal section; belongs to the enoyl-CoA hydratase/isomerase family. In the C-terminal section; belongs to the 3-hydroxyacyl-CoA dehydrogenase family. As to quaternary structure, heterotetramer of two alpha chains (FadB) and two beta chains (FadA).

The catalysed reaction is a (3S)-3-hydroxyacyl-CoA + NAD(+) = a 3-oxoacyl-CoA + NADH + H(+). It carries out the reaction a (3S)-3-hydroxyacyl-CoA = a (2E)-enoyl-CoA + H2O. It catalyses the reaction a 4-saturated-(3S)-3-hydroxyacyl-CoA = a (3E)-enoyl-CoA + H2O. The enzyme catalyses (3S)-3-hydroxybutanoyl-CoA = (3R)-3-hydroxybutanoyl-CoA. The catalysed reaction is a (3Z)-enoyl-CoA = a 4-saturated (2E)-enoyl-CoA. It carries out the reaction a (3E)-enoyl-CoA = a 4-saturated (2E)-enoyl-CoA. Its pathway is lipid metabolism; fatty acid beta-oxidation. Its function is as follows. Involved in the aerobic and anaerobic degradation of long-chain fatty acids via beta-oxidation cycle. Catalyzes the formation of 3-oxoacyl-CoA from enoyl-CoA via L-3-hydroxyacyl-CoA. It can also use D-3-hydroxyacyl-CoA and cis-3-enoyl-CoA as substrate. The polypeptide is Fatty acid oxidation complex subunit alpha (Escherichia coli O7:K1 (strain IAI39 / ExPEC)).